The chain runs to 264 residues: Thiazole synthase (264 aa).

The active-site Schiff-base intermediate with DXP is the Lys-106. 1-deoxy-D-xylulose 5-phosphate contacts are provided by residues Gly-167, 193 to 194 (AG), and 215 to 216 (NS).

Belongs to the ThiG family. As to quaternary structure, homotetramer. Forms heterodimers with either ThiH or ThiS.

Its subcellular location is the cytoplasm. The catalysed reaction is [ThiS sulfur-carrier protein]-C-terminal-Gly-aminoethanethioate + 2-iminoacetate + 1-deoxy-D-xylulose 5-phosphate = [ThiS sulfur-carrier protein]-C-terminal Gly-Gly + 2-[(2R,5Z)-2-carboxy-4-methylthiazol-5(2H)-ylidene]ethyl phosphate + 2 H2O + H(+). It participates in cofactor biosynthesis; thiamine diphosphate biosynthesis. Its function is as follows. Catalyzes the rearrangement of 1-deoxy-D-xylulose 5-phosphate (DXP) to produce the thiazole phosphate moiety of thiamine. Sulfur is provided by the thiocarboxylate moiety of the carrier protein ThiS. In vitro, sulfur can be provided by H(2)S. The protein is Thiazole synthase of Prochlorococcus marinus (strain AS9601).